The sequence spans 685 residues: MNKYSAFIVCISLVLLFTKKDVGSHNVDSRIYGFQQSSGICHIYNGTICRDVLSNAHVFVSPNLTMNDLEERLKAAYGVIKESKDMNANCRMYALPSLCFSSMPICRTPERTNLLYFANVATNAKQLKNVSIRRKRTKSKDIKNISIFKKKSTIYEDVFSTDISSKYPPTRESENLKRICREECELLENELCQKEYAIAKRHPVIGMVGVEDCQKLPQHKDCLSLGITIEVDKTENCYWEDGSTYRGVANVSASGKPCLRWSWLMKEISDFPELIGQNYCRNPGSVENSPWCFVDSSRERIIELCDIPKCADKIWIAIVGTTAAIILIFIIIFAIILFKRRTIMHYGMRNIHNINTPSADKNIYGNSQLNNAQDAGRGNLGNLSDHVALNSKLIERNTLLRINHFTLQDVEFLEELGEGAFGKVYKGQLLQPNKTTITVAIKALKENASVKTQQDFKREIELISDLKHQNIVCILGVVLNKEPYCMLFEYMANGDLHEFLISNSPTEGKSLSQLEFLQIALQISEGMQYLSAHHYVHRDLAARNCLVNEGLVVKISDFGLSRDIYSSDYYRVQSKSLLPVRWMPSESILYGKFTTESDVWSFGVVLWEIYSYGMQPYYGFSNQEVINLIRSRQLLSAPENCPTAVYSLMIECWHEQSVKRPTFTDISNRLKTWHEGHFKASNPEM.

Positions 1 to 24 are cleaved as a signal peptide; it reads MNKYSAFIVCISLVLLFTKKDVGS. Over 25 to 317 the chain is Extracellular; that stretch reads HNVDSRIYGF…PKCADKIWIA (293 aa). Positions 36 to 225 constitute an FZ domain; sequence QSSGICHIYN…LPQHKDCLSL (190 aa). Disulfide bonds link C41/C106, C49/C99, C90/C192, C180/C222, C184/C213, C237/C310, C258/C292, and C280/C305. 2 N-linked (GlcNAc...) asparagine glycosylation sites follow: N45 and N63. At T112 the chain carries Phosphothreonine. N129 is a glycosylation site (N-linked (GlcNAc...) asparagine). S131 is subject to Phosphoserine. A glycan (N-linked (GlcNAc...) asparagine) is linked at N144. The Kringle domain maps to 236–310; that stretch reads NCYWEDGSTY…IIELCDIPKC (75 aa). N-linked (GlcNAc...) asparagine glycosylation occurs at N250. Residues 318-338 traverse the membrane as a helical segment; sequence IVGTTAAIILIFIIIFAIILF. Over 339-685 the chain is Cytoplasmic; sequence KRRTIMHYGM…GHFKASNPEM (347 aa). Positions 410–677 constitute a Protein kinase domain; the sequence is VEFLEELGEG…NRLKTWHEGH (268 aa). ATP-binding positions include 416-424 and K442; that span reads LGEGAFGKV. D539 functions as the Proton acceptor in the catalytic mechanism. Phosphotyrosine; by autocatalysis occurs at positions 565, 569, and 570.

The protein belongs to the protein kinase superfamily. Tyr protein kinase family. ROR subfamily. As to expression, expressed in neurons of the developing nervous system.

It localises to the membrane. The catalysed reaction is L-tyrosyl-[protein] + ATP = O-phospho-L-tyrosyl-[protein] + ADP + H(+). Its function is as follows. Tyrosine-protein kinase receptor that functions during early stages of neuronal development. In Drosophila melanogaster (Fruit fly), this protein is Tyrosine-protein kinase transmembrane receptor Ror (Ror).